The chain runs to 319 residues: Glutathione synthetase (319 aa).

The ATP-grasp domain occupies 127–311 (KIFVTEFADL…VASLLWDAIE (185 aa)). 153 to 209 (RNEMGDIILKPLYGNGGAGVFHSARDDRNFSSLLEMFGQMFREPYIAQEYLPDVRKG) provides a ligand contact to ATP. The Mg(2+) site is built by E282 and N284.

Belongs to the prokaryotic GSH synthase family. The cofactor is Mg(2+). Mn(2+) serves as cofactor.

The enzyme catalyses gamma-L-glutamyl-L-cysteine + glycine + ATP = glutathione + ADP + phosphate + H(+). The protein operates within sulfur metabolism; glutathione biosynthesis; glutathione from L-cysteine and L-glutamate: step 2/2. This is Glutathione synthetase from Agrobacterium fabrum (strain C58 / ATCC 33970) (Agrobacterium tumefaciens (strain C58)).